The chain runs to 1589 residues: Paternally-expressed gene 3 protein (1589 aa).

The SCAN box domain occupies 46–128 (HQRFRNLIYV…TLLENYKEMY (83 aa)). Disordered regions lie at residues 128–230 (YQPE…ESYQ), 266–306 (DGHS…RRGI), and 319–349 (KFIK…MSDD). A compositionally biased stretch (acidic residues) spans 129–142 (QPEDDNNSDVTSDD). Basic and acidic residues-rich tracts occupy residues 143-152 (DMTRNRRESS), 161-182 (SGDR…DRWS), 206-225 (FEMD…RSQD), and 295-306 (PEAKKSTHRRGI). C2H2-type zinc fingers lie at residues 454–476 (YVCD…QIMH), 507–529 (FECK…RKIH), and 565–587 (YECR…QKIH). A compositionally biased stretch (basic and acidic residues) spans 588-607 (FGDDKDNEREHERERERGET). The interval 588–610 (FGDDKDNEREHERERERGETFRP) is disordered. The C2H2-type 4 zinc finger occupies 627–649 (YECKVCGETFLHSSSLKEHQKIH). The interval 838–930 (LVASKPPRSH…EFSVPSSNVR (93 aa)) is disordered. A compositionally biased stretch (basic and acidic residues) spans 868-881 (LNDKRQKIPARENP). The C2H2-type 5 zinc finger occupies 969 to 991 (YECQECGECFAHSSDLTEHQKIH). Positions 1056–1104 (EKSHGEESQGENTDGEETHSEETHGQETIEDPVIQSSDMEDPQKDDPDD) are disordered. Basic and acidic residues predominate over residues 1071–1082 (EETHSEETHGQE). 5 C2H2-type zinc fingers span residues 1107–1129 (YECE…QKVH), 1163–1185 (YECP…QRIH), 1225–1247 (IRCL…MRLH), 1282–1304 (FECA…VTVH), and 1332–1354 (YECK…KELH). The segment covering 1396-1416 (AEPEVEAAEPEVEAAEPEVEA) has biased composition (acidic residues). The interval 1396–1496 (AEPEVEAAEP…GIEDPEEGED (101 aa)) is disordered. Repeat copies occupy residues 1398–1404 (PEVEAAE), 1405–1411 (PEVEAAE), 1412–1418 (PEVEAAE), 1419–1423 (PNGEA), 1426–1430 (PDGEA), 1433–1437 (PIGEA), and 1440–1444 (PNGEA). The tract at residues 1398–1418 (PEVEAAEPEVEAAEPEVEAAE) is 3 X 7 AA repeat of P-E-V-E-A-A-E. The segment at 1419 to 1444 (PNGEAEGPDGEAAEPIGEAGQPNGEA) is 4 X 5 AA repeat of P-X-G-E-A. Acidic residues-rich tracts occupy residues 1450 to 1467 (DADE…ERAE) and 1476 to 1496 (PEGD…EGED). C2H2-type zinc fingers lie at residues 1506 to 1528 (YDCH…LKTH) and 1565 to 1587 (FKCD…QNTH).

This sequence belongs to the krueppel C2H2-type zinc-finger protein family. Homodimer. Interacts with SIAH1A and SIAH2. Interacts with TRAF2.

The protein localises to the nucleus. It is found in the cytoplasm. Its function is as follows. Induces apoptosis in cooperation with SIAH1A. Acts as a mediator between p53/TP53 and BAX in a neuronal death pathway that is activated by DNA damage. Acts synergistically with TRAF2 and inhibits TNF induced apoptosis through activation of NF-kappa-B. The protein is Paternally-expressed gene 3 protein (PEG3) of Gorilla gorilla gorilla (Western lowland gorilla).